Reading from the N-terminus, the 524-residue chain is Bifunctional methyltransferase (524 aa).

The tract at residues 1 to 306 (MQCSIKQILS…GHSRVILFSP (306 aa)) is hemK. Residues 1 to 308 (MQCSIKQILS…SRVILFSPIN (308 aa)) are RF MTase. S-adenosyl-L-methionine is bound by residues 146-150 (GTGSG), Asp-169, Trp-198, Asn-213, Glu-353, Glu-378, Asn-405, and Asp-427. 213–216 (NPPY) lines the substrate pocket. The tract at residues 307–524 (INLNRSYARR…MILRHVLGDH (218 aa)) is tRNA (guanine-N(7)-)-methyltransferase. The interval 311–524 (RSYARRIGKS…MILRHVLGDH (214 aa)) is tRNA MTase. Residue Asp-427 is part of the active site. Residues Lys-431 and Asp-463 each contribute to the substrate site.

In the C-terminal section; belongs to the class I-like SAM-binding methyltransferase superfamily. TrmB family. The protein in the N-terminal section; belongs to the protein N5-glutamine methyltransferase family. PrmC subfamily.

The catalysed reaction is L-glutaminyl-[peptide chain release factor] + S-adenosyl-L-methionine = N(5)-methyl-L-glutaminyl-[peptide chain release factor] + S-adenosyl-L-homocysteine + H(+). It catalyses the reaction guanosine(46) in tRNA + S-adenosyl-L-methionine = N(7)-methylguanosine(46) in tRNA + S-adenosyl-L-homocysteine. In terms of biological role, methylates the class 1 translation termination release factors RF1/PrfA and RF2/PrfB on the glutamine residue of the universally conserved GGQ motif. Its function is as follows. Catalyzes the formation of N(7)-methylguanine at position 46 (m7G46) in tRNA. The polypeptide is Bifunctional methyltransferase (prmC/trmB) (Rickettsia conorii (strain ATCC VR-613 / Malish 7)).